The following is a 287-amino-acid chain: Beta-lactamase GES-2 (287 aa).

The N-terminal stretch at 1–18 is a signal peptide; that stretch reads MRFIHALLLAGIAHSAYA. C63 and C233 are oxidised to a cystine. S64 serves as the catalytic Nucleophile; acyl-ester intermediate. Residues K67, S125, and E161 each contribute to the a beta-lactam site.

The protein belongs to the class-A beta-lactamase family.

The catalysed reaction is a beta-lactam + H2O = a substituted beta-amino acid. Its activity is regulated as follows. Inhibited by the beta-lactamase-blocking agents clavulanic acid, sulbactam and tazobactam. Extended-spectrum beta-lactamase (ESBL) which confers resistance to penicillins, as well as first, third and fourth-generation cephalosporins. Has modest carbapenem-hydrolyzing activity. Has cefotaxime-hydrolyzing activity. This chain is Beta-lactamase GES-2, found in Pseudomonas aeruginosa.